A 317-amino-acid chain; its full sequence is Regulator of microtubule dynamics protein 1 (317 aa).

The residue at position 168 (K168) is an N6-succinyllysine. TPR repeat units lie at residues A171–D207 and P225–F261.

Belongs to the RMDN family. Interacts with microtubules.

Its subcellular location is the cytoplasm. The protein localises to the cytoskeleton. The protein resides in the spindle. It is found in the spindle pole. This chain is Regulator of microtubule dynamics protein 1 (RMDN1), found in Bos taurus (Bovine).